The following is a 422-amino-acid chain: Ubiquitin-conjugating enzyme E2 Q1 (422 aa).

An N-acetylmethionine modification is found at Met1. Residues 1-24 show a composition bias toward low complexity; that stretch reads MQQPQPQGQQQPGPGQQLGVQGAA. 2 disordered regions span residues 1 to 40 and 173 to 221; these read MQQPQPQGQQQPGPGQQLGVQGAAPGAGGGPGGGPGPGPC and QPLP…EDDG. Positions 25-35 are enriched in gly residues; it reads PGAGGGPGGGP. Residues 185 to 200 are compositionally biased toward acidic residues; that stretch reads VSSEDEDEEMPEDTED. Residues 212–221 show a composition bias toward basic and acidic residues; sequence AEGKKSEDDG. Positions 251–415 constitute a UBC core domain; it reads QATDRLMKEL…VQIHEKNGWY (165 aa). Cys351 (glycyl thioester intermediate) is an active-site residue.

The protein belongs to the ubiquitin-conjugating enzyme family. Monomer and homodimer. Only the homodimer is linked to ubiquitin through thiolester activation. Interacts (via N-terminus) with B4GALT1 (via N-terminal cytoplasmic domain); the interaction is direct. Autoubiquitinated in vitro in the presence of NEDD4L. In terms of tissue distribution, expressed in liver, brain, heart, spleen, lung, kidney, muscle, ovary, epididymis, testis and placenta. Also expressed in thymus and ES cells. Only expressed in the uterus during pregnancy. Expressed in oocytes and during subsequent embryonic development stages (4-cell stage, blastocyst, 8.5 dpc, 13.5 dpc, 16.5 dpc and 18.5 dpc).

The protein resides in the nucleus. It localises to the cell projection. The protein localises to the filopodium. Its subcellular location is the cytoplasm. It is found in the cytosol. It catalyses the reaction S-ubiquitinyl-[E1 ubiquitin-activating enzyme]-L-cysteine + [E2 ubiquitin-conjugating enzyme]-L-cysteine = [E1 ubiquitin-activating enzyme]-L-cysteine + S-ubiquitinyl-[E2 ubiquitin-conjugating enzyme]-L-cysteine.. Its pathway is protein modification; protein ubiquitination. Functionally, catalyzes the covalent attachment of ubiquitin to other proteins. Involved in female fertility and embryo implantation. May be involved in hormonal homeostasis in females. Involved in regulation of B4GALT1 cell surface expression, B4GALT1-mediated cell adhesion to laminin and embryoid body formation. The protein is Ubiquitin-conjugating enzyme E2 Q1 (Ube2q1) of Mus musculus (Mouse).